We begin with the raw amino-acid sequence, 209 residues long: GTP cyclohydrolase-2 (209 aa).

49–53 lines the GTP pocket; it reads RIHSE. Zn(2+) is bound by residues C54, C65, and C67. Residues Q70, 92-94, and T114 contribute to the GTP site; that span reads EGR. Residue D126 is the Proton acceptor of the active site. Residue R128 is the Nucleophile of the active site. Residues T149 and K154 each contribute to the GTP site.

It belongs to the GTP cyclohydrolase II family. The cofactor is Zn(2+).

The enzyme catalyses GTP + 4 H2O = 2,5-diamino-6-hydroxy-4-(5-phosphoribosylamino)-pyrimidine + formate + 2 phosphate + 3 H(+). It participates in cofactor biosynthesis; riboflavin biosynthesis; 5-amino-6-(D-ribitylamino)uracil from GTP: step 1/4. Catalyzes the conversion of GTP to 2,5-diamino-6-ribosylamino-4(3H)-pyrimidinone 5'-phosphate (DARP), formate and pyrophosphate. The protein is GTP cyclohydrolase-2 of Shewanella halifaxensis (strain HAW-EB4).